A 168-amino-acid polypeptide reads, in one-letter code: Photosystem I assembly protein Ycf3 (168 aa).

TPR repeat units follow at residues 35–68 (AFAYYRDGMSAQSEGNYAEALQNYYEAMRLEIDP), 72–105 (SYILYNIGLIHTRNGEHTKALEYYFRALERNPFL), and 120–153 (GEQAIRQGDSEIAEAWFDQAAEYWKQALALTPGN).

Belongs to the Ycf3 family.

The protein resides in the plastid. It localises to the chloroplast thylakoid membrane. In terms of biological role, essential for the assembly of the photosystem I (PSI) complex. May act as a chaperone-like factor to guide the assembly of the PSI subunits. This Morus indica (Mulberry) protein is Photosystem I assembly protein Ycf3.